A 481-amino-acid polypeptide reads, in one-letter code: Protein FIZZY-RELATED 3 (481 aa).

Positions 100–165 are disordered; that stretch reads PAGGQGSASS…RKVPKTPHKV (66 aa). A compositionally biased stretch (low complexity) spans 125–136; it reads SNSSPSSPFSPS. Basic residues predominate over residues 154-163; it reads PPRKVPKTPH. 7 WD repeats span residues 172-209, 213-252, 255-292, 296-335, 338-380, 382-423, and 426-465; these read QDDF…VTKL, GPND…RVRT, GHQT…DFVS, GHKS…PILK, EHTA…QLNS, DTGS…KVAT, and GHSM…KMQT.

It belongs to the WD repeat CDC20/Fizzy family. In terms of assembly, associates with the APC/C complex. Interacts with CDC20-1, CDC20-2, CYCA1-1, CYCA3-4, CYCB1-1 and CYCB1-2. Binds to GIG1 and PYM.

It functions in the pathway protein modification; protein ubiquitination. Its function is as follows. Activator protein that regulates the ubiquitin ligase activity and substrate specificity of the anaphase promoting complex/cyclosome (APC/C). The polypeptide is Protein FIZZY-RELATED 3 (FZR3) (Arabidopsis thaliana (Mouse-ear cress)).